The sequence spans 283 residues: 2,3,4,5-tetrahydropyridine-2,6-dicarboxylate N-succinyltransferase (283 aa).

The substrate site is built by Arg107 and Asp144.

This sequence belongs to the transferase hexapeptide repeat family. Homotrimer.

It is found in the cytoplasm. The catalysed reaction is (S)-2,3,4,5-tetrahydrodipicolinate + succinyl-CoA + H2O = (S)-2-succinylamino-6-oxoheptanedioate + CoA. It functions in the pathway amino-acid biosynthesis; L-lysine biosynthesis via DAP pathway; LL-2,6-diaminopimelate from (S)-tetrahydrodipicolinate (succinylase route): step 1/3. This chain is 2,3,4,5-tetrahydropyridine-2,6-dicarboxylate N-succinyltransferase, found in Rhodospirillum rubrum (strain ATCC 11170 / ATH 1.1.1 / DSM 467 / LMG 4362 / NCIMB 8255 / S1).